We begin with the raw amino-acid sequence, 401 residues long: Probable tRNA sulfurtransferase (401 aa).

The region spanning 60 to 165 is the THUMP domain; that stretch reads EPIIEKLKTV…QDGTYVTCRD (106 aa). ATP-binding positions include 183-184, 208-209, Arg-265, Gly-287, and Gln-296; these read ML and HF.

Belongs to the ThiI family.

The protein resides in the cytoplasm. It catalyses the reaction [ThiI sulfur-carrier protein]-S-sulfanyl-L-cysteine + a uridine in tRNA + 2 reduced [2Fe-2S]-[ferredoxin] + ATP + H(+) = [ThiI sulfur-carrier protein]-L-cysteine + a 4-thiouridine in tRNA + 2 oxidized [2Fe-2S]-[ferredoxin] + AMP + diphosphate. The enzyme catalyses [ThiS sulfur-carrier protein]-C-terminal Gly-Gly-AMP + S-sulfanyl-L-cysteinyl-[cysteine desulfurase] + AH2 = [ThiS sulfur-carrier protein]-C-terminal-Gly-aminoethanethioate + L-cysteinyl-[cysteine desulfurase] + A + AMP + 2 H(+). The protein operates within cofactor biosynthesis; thiamine diphosphate biosynthesis. Functionally, catalyzes the ATP-dependent transfer of a sulfur to tRNA to produce 4-thiouridine in position 8 of tRNAs, which functions as a near-UV photosensor. Also catalyzes the transfer of sulfur to the sulfur carrier protein ThiS, forming ThiS-thiocarboxylate. This is a step in the synthesis of thiazole, in the thiamine biosynthesis pathway. The sulfur is donated as persulfide by IscS. This is Probable tRNA sulfurtransferase from Geobacillus kaustophilus (strain HTA426).